A 488-amino-acid chain; its full sequence is MTFKDLRDFIAQLEQRGALKRIQVPISPVLEMTEVCDRTLRAKGPALLFEKPTGFDMPVLGNLFGTPERVALGMGAEDVGALREIGTLLAQLKEPEPPKGFKDAWAKLPMYRKVLSMAPKVLKDAPCQEVVEEGDDVDLGRLPVQTCWPGDVGPLITWGLTVTRGPNKERQNLGIYRQQVIGRNKVIMRWLSHRGGALDYREWCQKHPGQPYPVAVALGADPATILGAVTPVPDTLSEYAFAGLLRGHRTELVKCRGSDLQVPASAEIVLEGVIHPGEMADEGPYGDHTGYYNEVDRFPVFTVERVTRRQKPIYHSTYTGRPPDEPAILGVALNEVFVPILQKQFPEIVDFYLPPEGCSYRMAVVTMKKQYPGHAKRVMLGVWSFLRQFMYTKFVIVTDDDIDARDWNDVIWAITTRMDPKRDTVMIDNTPIDYLDFASPVSGLGSKMGLDATHKWPGETSREWGRAIVKDEAVTRRIDELWSSLGID.

N172 lines the Mn(2+) pocket. Prenylated FMN is bound by residues 175 to 177 (IYR), 189 to 191 (RWL), and 194 to 195 (RG). E238 contacts Mn(2+). The active-site Proton donor is the D287.

This sequence belongs to the UbiD family. Homohexamer. Prenylated FMN serves as cofactor. Requires Mn(2+) as cofactor.

It localises to the cell membrane. The catalysed reaction is a 4-hydroxy-3-(all-trans-polyprenyl)benzoate + H(+) = a 2-(all-trans-polyprenyl)phenol + CO2. Its pathway is cofactor biosynthesis; ubiquinone biosynthesis. In terms of biological role, catalyzes the decarboxylation of 3-octaprenyl-4-hydroxy benzoate to 2-octaprenylphenol, an intermediate step in ubiquinone biosynthesis. This is 3-octaprenyl-4-hydroxybenzoate carboxy-lyase from Pseudomonas paraeruginosa (strain DSM 24068 / PA7) (Pseudomonas aeruginosa (strain PA7)).